The following is a 379-amino-acid chain: Retinoic acid receptor RXR-alpha-B (379 aa).

Residues 1–22 (MPVPEQKQTVQLSSPMNAVSSS) are compositionally biased toward polar residues. Positions 1–24 (MPVPEQKQTVQLSSPMNAVSSSED) are disordered. The segment at 1–53 (MPVPEQKQTVQLSSPMNAVSSSEDIKPPLGLNGVMKVPAHRIGTLSLSLTKHI) is modulating. Residues 51 to 126 (KHICAICGDR…MGMKREAVQE (76 aa)) constitute a DNA-binding region (nuclear receptor). Cys-54, Cys-57, Cys-71, and Cys-74 together coordinate Zn(2+). The NR C4-type zinc-finger motif lies at 54–74 (CAICGDRSSGKHYGVYSCEGC). The nuclear localization signal stretch occupies residues 79 to 84 (KRTVRK). Positions 90, 96, 106, and 109 each coordinate Zn(2+). An NR C4-type zinc finger spans residues 90–109 (CRDNKDCMIDKRQRNRCQYC). A hinge region spans residues 120 to 141 (KREAVQEERQRAKERSEAEFGG). Residues 144-375 (NEDMPVEKIL…TFLMEMLEAP (232 aa)) enclose the NR LBD domain. 2 residues coordinate 9-cis-retinoate: Arg-233 and Ala-244. Residues Arg-233 and Ala-244 each contribute to the all-trans-retinoate site. Positions 265-285 (RVLTELVSKMRDMQMDKTELG) are required for nuclear export. The tract at residues 364–375 (IDTFLMEMLEAP) is AF-2.

Belongs to the nuclear hormone receptor family. NR2 subfamily. Homodimer. Heterodimer; with a rar molecule. Binds DNA preferentially as a rar/rxr heterodimer. As to expression, uniform expression from the blastula to mid-gastrula stages. At 12 hours post-fertilization (hpf), expressed strongly in the tail and weakly elsewhere. At 24 hpf, weak expression in the forebrain, eyes and pharyngeal endoderm and continued expression in the tail mesoderm. At 48 hpf, anterior expression limited to ventral cells underlying the head, medial expression in the pectoral fin bud mesoderm and continued tail expression.

The protein resides in the nucleus. Functionally, receptor for retinoic acid that acts as a transcription factor. Forms homo- or heterodimers with retinoic acid receptors (rars) and binds to target response elements in response to their ligands, all-trans or 9-cis retinoic acid, to regulate gene expression in various biological processes. The rar/rxr heterodimers bind to the retinoic acid response elements (RARE) composed of tandem 5'-AGGTCA-3' sites known as DR1-DR5 to regulate transcription. The high affinity ligand for rxrs is 9-cis retinoic acid. In the absence of ligand, the rar/rxr heterodimers associate with a multiprotein complex containing transcription corepressors that induce histone deacetylation, chromatin condensation and transcriptional suppression. On ligand binding, the corepressors dissociate from the receptors and coactivators are recruited leading to transcriptional activation. The sequence is that of Retinoic acid receptor RXR-alpha-B (rxrab) from Danio rerio (Zebrafish).